The sequence spans 461 residues: Diacylglycerol O-acyltransferase 1 (461 aa).

Residues 1–38 (MQDSMDDSLREAEGRQDDSEVSSGTTLGSSTPEDSGVT) form a disordered region. Over 1-112 (MQDSMDDSLR…TLVVAWHTSS (112 aa)) the chain is Cytoplasmic. A compositionally biased stretch (basic and acidic residues) spans 7–18 (DSLREAEGRQDD). Positions 21–33 (VSSGTTLGSSTPE) are enriched in polar residues. The helical transmembrane segment at 113–133 (FIYMTVLVLFLAANPLMWWFM) threads the bilayer. The Lumenal segment spans residues 134 to 230 (VPYMVYYVWN…ARPQVATGPR (97 aa)). Residues 231–251 (YIFGYHPHGVGALGAFGAIAT) form a helical membrane-spanning segment. The Cytoplasmic segment spans residues 252 to 258 (EGCNWSK). Residues 259–279 (VFAGIPACLCTLVNQFQIPIY) form a helical membrane-spanning segment. The Lumenal portion of the chain corresponds to 280-332 (RDYLLGLGCTSVARKNVLKVLEQNYSVCIVVGGAQEALLSRVGSTELVLNKRK). The chain crosses the membrane as a helical span at residues 333-353 (GFIKLALETGNVNLVPIYAFG). At 354–461 (ETDCFNVLDT…YAGKELKIVE (108 aa)) the chain is on the cytoplasmic side.

It belongs to the diacylglycerol acyltransferase family.

It localises to the lipid droplet. The protein localises to the endoplasmic reticulum membrane. The catalysed reaction is an acyl-CoA + a 1,2-diacyl-sn-glycerol = a triacyl-sn-glycerol + CoA. The enzyme catalyses a 2-acylglycerol + an acyl-CoA = a 1,2-diacyl-sn-glycerol + CoA. It participates in glycerolipid metabolism; triacylglycerol biosynthesis. Functionally, catalyzes the terminal and only committed step in triacylglycerol (TAG) synthesis by using diacylglycerol (DAG) and fatty acyl-CoA as substrates. Required for storage lipid synthesis. Major DAG esterifying enzyme in stationary phase when TAG production is particularly active. Involved in lipid particle synthesis from the endoplasmic reticulum, promoting localized TAG production at discrete ER subdomains. The chain is Diacylglycerol O-acyltransferase 1 (DGA1) from Eremothecium gossypii (strain ATCC 10895 / CBS 109.51 / FGSC 9923 / NRRL Y-1056) (Yeast).